We begin with the raw amino-acid sequence, 230 residues long: Large ribosomal subunit protein uL4 (230 aa).

Positions 59–113 are disordered; the sequence is RQGTHATKTRGEVSGGGKKPYRQKGTGRARQGSTRAPQFTGGGTVHGPQPRDYSQ.

It belongs to the universal ribosomal protein uL4 family. In terms of assembly, part of the 50S ribosomal subunit.

Functionally, one of the primary rRNA binding proteins, this protein initially binds near the 5'-end of the 23S rRNA. It is important during the early stages of 50S assembly. It makes multiple contacts with different domains of the 23S rRNA in the assembled 50S subunit and ribosome. Its function is as follows. Forms part of the polypeptide exit tunnel. The protein is Large ribosomal subunit protein uL4 of Nocardia farcinica (strain IFM 10152).